The sequence spans 141 residues: UPF0225 protein Rmet_0111 (141 aa).

Belongs to the UPF0225 family.

The chain is UPF0225 protein Rmet_0111 from Cupriavidus metallidurans (strain ATCC 43123 / DSM 2839 / NBRC 102507 / CH34) (Ralstonia metallidurans).